Consider the following 503-residue polypeptide: Aspartyl/glutamyl-tRNA(Asn/Gln) amidotransferase subunit B (503 aa).

The protein belongs to the GatB/GatE family. GatB subfamily. In terms of assembly, heterotrimer of A, B and C subunits.

It carries out the reaction L-glutamyl-tRNA(Gln) + L-glutamine + ATP + H2O = L-glutaminyl-tRNA(Gln) + L-glutamate + ADP + phosphate + H(+). It catalyses the reaction L-aspartyl-tRNA(Asn) + L-glutamine + ATP + H2O = L-asparaginyl-tRNA(Asn) + L-glutamate + ADP + phosphate + 2 H(+). In terms of biological role, allows the formation of correctly charged Asn-tRNA(Asn) or Gln-tRNA(Gln) through the transamidation of misacylated Asp-tRNA(Asn) or Glu-tRNA(Gln) in organisms which lack either or both of asparaginyl-tRNA or glutaminyl-tRNA synthetases. The reaction takes place in the presence of glutamine and ATP through an activated phospho-Asp-tRNA(Asn) or phospho-Glu-tRNA(Gln). This Mycolicibacterium smegmatis (strain ATCC 700084 / mc(2)155) (Mycobacterium smegmatis) protein is Aspartyl/glutamyl-tRNA(Asn/Gln) amidotransferase subunit B.